We begin with the raw amino-acid sequence, 300 residues long: Urease accessory protein UreD (300 aa).

Belongs to the UreD family. As to quaternary structure, ureD, UreF and UreG form a complex that acts as a GTP-hydrolysis-dependent molecular chaperone, activating the urease apoprotein by helping to assemble the nickel containing metallocenter of UreC. The UreE protein probably delivers the nickel.

The protein resides in the cytoplasm. Required for maturation of urease via the functional incorporation of the urease nickel metallocenter. This chain is Urease accessory protein UreD, found in Prochlorococcus marinus (strain MIT 9312).